We begin with the raw amino-acid sequence, 45 residues long: Keratin-associated protein 22-2 (45 aa).

It belongs to the KRTAP type 20 family. In terms of assembly, interacts with hair keratins.

Its function is as follows. In the hair cortex, hair keratin intermediate filaments are embedded in an interfilamentous matrix, consisting of hair keratin-associated proteins (KRTAP), which are essential for the formation of a rigid and resistant hair shaft through their extensive disulfide bond cross-linking with abundant cysteine residues of hair keratins. The matrix proteins include the high-sulfur and high-glycine-tyrosine keratins. In Homo sapiens (Human), this protein is Keratin-associated protein 22-2 (KRTAP22-2).